A 247-amino-acid chain; its full sequence is E3 SUMO-protein ligase NSE2 (247 aa).

The residue at position 1 (methionine 1) is an N-acetylmethionine. Glycyl lysine isopeptide (Lys-Gly) (interchain with G-Cter in SUMO2) cross-links involve residues lysine 90 and lysine 107. At serine 116 the chain carries Phosphoserine. Residues lysine 125 and lysine 130 each participate in a glycyl lysine isopeptide (Lys-Gly) (interchain with G-Cter in SUMO2) cross-link. The segment at 154–240 adopts an SP-RING-type zinc-finger fold; sequence VDEDIIVTQS…LRRAIENHNK (87 aa). Zn(2+)-binding residues include cysteine 185, histidine 187, cysteine 210, and cysteine 215.

This sequence belongs to the NSE2 family. Component of the SMC5-SMC6 complex which consists at least of SMC5, SMC6, NSMCE2, NSMCE1, NSMCE4A or EID3 and NSMCE3. Sumoylated, possibly via autosumoylation.

Its subcellular location is the nucleus. The protein localises to the chromosome. The protein resides in the telomere. It localises to the PML body. Its pathway is protein modification; protein sumoylation. In terms of biological role, E3 SUMO-protein ligase component of the SMC5-SMC6 complex, a complex involved in DNA double-strand break repair by homologous recombination. Is not be required for the stability of the complex. The complex may promote sister chromatid homologous recombination by recruiting the SMC1-SMC3 cohesin complex to double-strand breaks. The complex is required for telomere maintenance via recombination in ALT (alternative lengthening of telomeres) cell lines and mediates sumoylation of shelterin complex (telosome) components which is proposed to lead to shelterin complex disassembly in ALT-associated PML bodies (APBs). Acts as an E3 ligase mediating SUMO attachment to various proteins such as SMC6L1 and TSNAX, the shelterin complex subunits TERF1, TERF2, TINF2 and TERF2IP, RAD51AP1, and maybe the cohesin components RAD21 and STAG2. Required for recruitment of telomeres to PML nuclear bodies. SUMO protein-ligase activity is required for the prevention of DNA damage-induced apoptosis by facilitating DNA repair, and for formation of APBs in ALT cell lines. Required for sister chromatid cohesion during prometaphase and mitotic progression. The polypeptide is E3 SUMO-protein ligase NSE2 (NSMCE2) (Homo sapiens (Human)).